The chain runs to 568 residues: Small ribosomal subunit protein bS1 (568 aa).

6 consecutive S1 motif domains span residues 39–100 (KTVV…LSRE), 118–184 (GEFV…VSRR), 205–273 (GMVL…LGIK), 290–360 (GKQM…LSIK), 377–447 (GTII…LGIK), and 464–533 (GTIV…LSVK).

This sequence belongs to the bacterial ribosomal protein bS1 family.

Binds mRNA; thus facilitating recognition of the initiation point. It is needed to translate mRNA with a short Shine-Dalgarno (SD) purine-rich sequence. In Rickettsia conorii (strain ATCC VR-613 / Malish 7), this protein is Small ribosomal subunit protein bS1 (rpsA).